The primary structure comprises 108 residues: Large ribosomal subunit protein bL21c (108 aa).

It belongs to the bacterial ribosomal protein bL21 family. As to quaternary structure, part of the 50S ribosomal subunit.

Its subcellular location is the plastid. The protein localises to the chloroplast. This protein binds to 23S rRNA. The sequence is that of Large ribosomal subunit protein bL21c from Cyanidium caldarium (Red alga).